Here is a 657-residue protein sequence, read N- to C-terminus: Translation factor GUF1, mitochondrial (657 aa).

Residues 1 to 21 constitute a mitochondrion transit peptide; it reads MLKTLGLRSLCPSLGGRGFRR. In terms of domain architecture, tr-type G spans 56 to 240; it reads ENYRNFSIVA…TIVDRIPPPT (185 aa). GTP contacts are provided by residues 65–72, 132–136, and 186–189; these read AHVDHGKS, DTPGH, and NKID.

The protein belongs to the TRAFAC class translation factor GTPase superfamily. Classic translation factor GTPase family. LepA subfamily.

The protein resides in the mitochondrion inner membrane. It catalyses the reaction GTP + H2O = GDP + phosphate + H(+). Promotes mitochondrial protein synthesis. May act as a fidelity factor of the translation reaction, by catalyzing a one-codon backward translocation of tRNAs on improperly translocated ribosomes. Binds to mitochondrial ribosomes in a GTP-dependent manner. This chain is Translation factor GUF1, mitochondrial, found in Candida glabrata (strain ATCC 2001 / BCRC 20586 / JCM 3761 / NBRC 0622 / NRRL Y-65 / CBS 138) (Yeast).